We begin with the raw amino-acid sequence, 692 residues long: Peroxisomal primary amine oxidase (692 aa).

Over residues 1–22 the composition is skewed to low complexity; it reads MERLRQIASQATAASAAPARPA. Residues 1–26 form a disordered region; sequence MERLRQIASQATAASAAPARPAHPLD. Asn243 carries N-linked (GlcNAc...) asparagine glycosylation. 317–328 contributes to the substrate binding site; sequence ALDIGEYGAGYM. Catalysis depends on Asp319, which acts as the Proton acceptor. Residues Cys338 and Cys364 are joined by a disulfide bond. 402 to 407 serves as a coordination point for substrate; it reads AANYEY. Catalysis depends on Tyr405, which acts as the Schiff-base intermediate with substrate; via topaquinone. Residue Tyr405 is modified to 2',4',5'-topaquinone. Cu cation-binding residues include His456 and His458. Residues Asp465, Asp613, and Ile614 each coordinate Mn(2+). Residue His624 coordinates Cu cation.

The protein belongs to the copper/topaquinone oxidase family. Homodimer. Cu cation serves as cofactor. Requires Zn(2+) as cofactor. The cofactor is L-topaquinone. Mn(2+) is required as a cofactor. Topaquinone (TPQ) is generated by copper-dependent autoxidation of a specific tyrosyl residue.

It is found in the peroxisome. It catalyses the reaction a primary methyl amine + O2 + H2O = an aldehyde + H2O2 + NH4(+). In Pichia angusta (Yeast), this protein is Peroxisomal primary amine oxidase (AMO).